A 160-amino-acid polypeptide reads, in one-letter code: Protein MGF 300-2R (160 aa).

It belongs to the asfivirus MGF 300 family.

In terms of biological role, plays a role in virus cell tropism, and may be required for efficient virus replication in macrophages. This is Protein MGF 300-2R from African swine fever virus (isolate Pig/Kenya/KEN-50/1950) (ASFV).